The primary structure comprises 296 residues: Acetylglutamate kinase (296 aa).

Substrate is bound by residues 67–68 (GG), R89, and N194.

This sequence belongs to the acetylglutamate kinase family. ArgB subfamily.

It localises to the cytoplasm. The enzyme catalyses N-acetyl-L-glutamate + ATP = N-acetyl-L-glutamyl 5-phosphate + ADP. It functions in the pathway amino-acid biosynthesis; L-arginine biosynthesis; N(2)-acetyl-L-ornithine from L-glutamate: step 2/4. Its function is as follows. Catalyzes the ATP-dependent phosphorylation of N-acetyl-L-glutamate. The polypeptide is Acetylglutamate kinase (Brucella anthropi (strain ATCC 49188 / DSM 6882 / CCUG 24695 / JCM 21032 / LMG 3331 / NBRC 15819 / NCTC 12168 / Alc 37) (Ochrobactrum anthropi)).